The chain runs to 117 residues: MAVDTANEVKAIARYIRMSPSKVRRVLDQLRGRSYREALILLEFMPYKSCEPILKVLRSAVANAEHNQGLDPTQLVISQAYADMGPSLKRFRPRAQGRAYQIRKQTCHITIAVAPQV.

This sequence belongs to the universal ribosomal protein uL22 family. As to quaternary structure, part of the 50S ribosomal subunit.

Its function is as follows. This protein binds specifically to 23S rRNA; its binding is stimulated by other ribosomal proteins, e.g. L4, L17, and L20. It is important during the early stages of 50S assembly. It makes multiple contacts with different domains of the 23S rRNA in the assembled 50S subunit and ribosome. Functionally, the globular domain of the protein is located near the polypeptide exit tunnel on the outside of the subunit, while an extended beta-hairpin is found that lines the wall of the exit tunnel in the center of the 70S ribosome. The polypeptide is Large ribosomal subunit protein uL22 (Synechococcus elongatus (strain ATCC 33912 / PCC 7942 / FACHB-805) (Anacystis nidulans R2)).